Consider the following 177-residue polypeptide: Sec-independent protein translocase protein TatB (177 aa).

The helical transmembrane segment at 1-21 threads the bilayer; the sequence is MFDFAWSEIAVIGVVALVVIG. The span at 136–146 shows a compositional bias: basic and acidic residues; the sequence is REKTVSSETAR. Residues 136–177 form a disordered region; the sequence is REKTVSSETARRAATAPAFIPPGEAFRSARRAPAFIPPADQG.

It belongs to the TatB family. The Tat system comprises two distinct complexes: a TatABC complex, containing multiple copies of TatA, TatB and TatC subunits, and a separate TatA complex, containing only TatA subunits. Substrates initially bind to the TatABC complex, which probably triggers association of the separate TatA complex to form the active translocon.

It is found in the cell inner membrane. Part of the twin-arginine translocation (Tat) system that transports large folded proteins containing a characteristic twin-arginine motif in their signal peptide across membranes. Together with TatC, TatB is part of a receptor directly interacting with Tat signal peptides. TatB may form an oligomeric binding site that transiently accommodates folded Tat precursor proteins before their translocation. This Granulibacter bethesdensis (strain ATCC BAA-1260 / CGDNIH1) protein is Sec-independent protein translocase protein TatB.